The primary structure comprises 301 residues: tRNA pseudouridine synthase B (301 aa).

Aspartate 38 acts as the Nucleophile in catalysis.

This sequence belongs to the pseudouridine synthase TruB family. Type 1 subfamily.

It catalyses the reaction uridine(55) in tRNA = pseudouridine(55) in tRNA. Functionally, responsible for synthesis of pseudouridine from uracil-55 in the psi GC loop of transfer RNAs. The protein is tRNA pseudouridine synthase B of Lacticaseibacillus paracasei (strain ATCC 334 / BCRC 17002 / CCUG 31169 / CIP 107868 / KCTC 3260 / NRRL B-441) (Lactobacillus paracasei).